Consider the following 389-residue polypeptide: (+)-bicyclogermacrene synthase TS4 (389 aa).

Mg(2+) contacts are provided by Asp136, Glu140, His284, Gly288, and Asp292. Positions 136–140 (DEVCE) match the DDxx(x)D/E motif motif. The short motif at 284–292 (HDFIGLQKD) is the NDxxSxxxD/E motif element.

Belongs to the terpene synthase family.

The enzyme catalyses (2E,6E)-farnesyl diphosphate = bicyclogermacrene + diphosphate. Functionally, catalyzes the cyclization of trans,trans-farnesyl diphosphate (FPP) to the bicyclic sesquiterpene bicyclogermacrene. The sequence is that of (+)-bicyclogermacrene synthase TS4 from Penicillium expansum (Blue mold rot fungus).